Here is a 130-residue protein sequence, read N- to C-terminus: MVSPSLRVPFAVALGAIGGSLSRYYLSLWFAERFGPSFPYGTLIINLSGCVVMGWFMTVAMERPEISPEIRLLFGVGFLGSYTTFSTYELDTFSLWQQHRFATGLVYWLGSCLFGALAMELGILLARLWR.

Transmembrane regions (helical) follow at residues 10–30, 41–61, 72–89, and 105–125; these read FAVA…SLWF, GTLI…TVAM, LLFG…STYE, and LVYW…GILL. 2 residues coordinate Na(+): G80 and T83.

Belongs to the fluoride channel Fluc/FEX (TC 1.A.43) family.

The protein localises to the cell inner membrane. It catalyses the reaction fluoride(in) = fluoride(out). Na(+) is not transported, but it plays an essential structural role and its presence is essential for fluoride channel function. Functionally, fluoride-specific ion channel. Important for reducing fluoride concentration in the cell, thus reducing its toxicity. In Synechococcus sp. (strain JA-2-3B'a(2-13)) (Cyanobacteria bacterium Yellowstone B-Prime), this protein is Fluoride-specific ion channel FluC.